Reading from the N-terminus, the 325-residue chain is RNA ligase 1 (325 aa).

Mg(2+) is required as a cofactor. The cofactor is Mn(2+). In terms of processing, AMPylates itself (auto-AMPylation).

The catalysed reaction is ATP + (ribonucleotide)n-3'-hydroxyl + 5'-phospho-(ribonucleotide)m = (ribonucleotide)n+m + AMP + diphosphate.. In terms of biological role, functions as an RNA ligase, in vitro. The ligation reaction entails three nucleotidyl transfer steps. In the first step, the RNA ligase reacts with ATP in the absence of nucleic acid to form a covalent ligase-AMP intermediate and release pyrophosphate. In step 2, the ligase-AMP binds to the nucleic acid and transfers the adenylate to the 5'-PO4 terminus to form an adenylylated intermediate. In step 3, the RNA ligase directs the attack of the 3'-OH on the 5'-phosphoanhydride linkage, resulting in a repaired 3'-5' phosphodiester and release of AMP. Exhibits selectivity for single-stranded RNA substrates and may not have nick-sealing activity on double-stranded DNA-RNA hybrids. May play a role in maintaining RNA integrity under stress conditions, for example in response to reactive oxygen species (ROS). This Danio rerio (Zebrafish) protein is RNA ligase 1.